A 179-amino-acid polypeptide reads, in one-letter code: GTP-dependent dephospho-CoA kinase (179 aa).

The GTP site is built by Asp55, Val57, Asp74, Lys76, and Glu128.

The protein belongs to the GTP-dependent DPCK family.

It carries out the reaction 3'-dephospho-CoA + GTP = GDP + CoA + H(+). The protein operates within cofactor biosynthesis; coenzyme A biosynthesis. Catalyzes the GTP-dependent phosphorylation of the 3'-hydroxyl group of dephosphocoenzyme A to form coenzyme A (CoA). This chain is GTP-dependent dephospho-CoA kinase, found in Saccharolobus islandicus (strain M.16.4 / Kamchatka #3) (Sulfolobus islandicus).